The chain runs to 237 residues: uncharacterized protein (237 aa).

The a divalent metal cation site is built by glutamate 91, glutamate 93, and aspartate 122.

Belongs to the FAH family.

This is an uncharacterized protein from Methanocaldococcus jannaschii (strain ATCC 43067 / DSM 2661 / JAL-1 / JCM 10045 / NBRC 100440) (Methanococcus jannaschii).